Consider the following 271-residue polypeptide: tRNA pseudouridine synthase A (271 aa).

The Nucleophile role is filled by D51. Y109 lines the substrate pocket.

Belongs to the tRNA pseudouridine synthase TruA family. In terms of assembly, homodimer.

It catalyses the reaction uridine(38/39/40) in tRNA = pseudouridine(38/39/40) in tRNA. Its function is as follows. Formation of pseudouridine at positions 38, 39 and 40 in the anticodon stem and loop of transfer RNAs. The chain is tRNA pseudouridine synthase A from Methylococcus capsulatus (strain ATCC 33009 / NCIMB 11132 / Bath).